Here is a 433-residue protein sequence, read N- to C-terminus: Phosphomethylpyrimidine synthase 1 (433 aa).

Residues methionine 95, tyrosine 124, histidine 163, 185 to 187 (SRG), 226 to 229 (NAMR), and glutamate 265 contribute to the substrate site. Histidine 269 contacts Zn(2+). Tyrosine 292 serves as a coordination point for substrate. Position 333 (histidine 333) interacts with Zn(2+). Positions 408, 411, and 415 each coordinate [4Fe-4S] cluster.

It belongs to the ThiC family. [4Fe-4S] cluster serves as cofactor.

The enzyme catalyses 5-amino-1-(5-phospho-beta-D-ribosyl)imidazole + S-adenosyl-L-methionine = 4-amino-2-methyl-5-(phosphooxymethyl)pyrimidine + CO + 5'-deoxyadenosine + formate + L-methionine + 3 H(+). It functions in the pathway cofactor biosynthesis; thiamine diphosphate biosynthesis. Functionally, catalyzes the synthesis of the hydroxymethylpyrimidine phosphate (HMP-P) moiety of thiamine from aminoimidazole ribotide (AIR) in a radical S-adenosyl-L-methionine (SAM)-dependent reaction. This is Phosphomethylpyrimidine synthase 1 from Methanothermobacter thermautotrophicus (strain ATCC 29096 / DSM 1053 / JCM 10044 / NBRC 100330 / Delta H) (Methanobacterium thermoautotrophicum).